Here is a 495-residue protein sequence, read N- to C-terminus: DNA double-strand break repair helicase HerA (495 aa).

Residues R142, 151–156 (GSGKSN), and 459–460 (KI) contribute to the ATP site.

The protein belongs to the HerA family. In terms of assembly, interacts with Rad50 and Mre11.

The enzyme catalyses Couples ATP hydrolysis with the unwinding of duplex DNA at the replication fork by translocating in the 5'-3' direction. This creates two antiparallel DNA single strands (ssDNA). The leading ssDNA polymer is the template for DNA polymerase III holoenzyme which synthesizes a continuous strand.. It carries out the reaction ATP + H2O = ADP + phosphate + H(+). The catalysed reaction is Couples ATP hydrolysis with the unwinding of duplex DNA by translocating in the 3'-5' direction.. ATPase activity is slightly stimulated by either circular single- or double-stranded (ds)DNA with a weak preference for dsDNA. Functionally, involved in DNA double-strand break (DSB) repair. Probably acts with NurA to stimulate resection of the 5' strand and produce the long 3' single-strand that is required for RadA loading. Has DNA-dependent ATPase activity and bidirectional DNA helicase activity. Loads on either a 3' or a 5' DNA tail for subsequent DNA unwinding; has no activity on blunt-end DNA. The sequence is that of DNA double-strand break repair helicase HerA from Sulfolobus acidocaldarius (strain ATCC 33909 / DSM 639 / JCM 8929 / NBRC 15157 / NCIMB 11770).